A 124-amino-acid chain; its full sequence is Prefoldin subunit beta (124 aa).

Belongs to the prefoldin subunit beta family. As to quaternary structure, heterohexamer of two alpha and four beta subunits.

The protein localises to the cytoplasm. In terms of biological role, molecular chaperone capable of stabilizing a range of proteins. Seems to fulfill an ATP-independent, HSP70-like function in archaeal de novo protein folding. This Pyrobaculum arsenaticum (strain DSM 13514 / JCM 11321 / PZ6) protein is Prefoldin subunit beta.